A 287-amino-acid chain; its full sequence is Putative sugar uptake protein LJ_0170 (287 aa).

A run of 10 helical transmembrane segments spans residues 4-23 (VYLF…IASV), 28-50 (VYNQ…MAIM), 56-78 (WSLF…GQYI), 91-108 (ISTG…VLAF), 118-137 (LYGF…TSFT), 150-169 (VSTI…SSSI), 179-198 (SIFF…YTLV), 211-230 (VQSG…YILS), 240-259 (FVIS…IFLH), and 266-285 (GLIF…MLTT).

It belongs to the GRP transporter (TC 2.A.7.5) family.

The protein resides in the cell membrane. This is Putative sugar uptake protein LJ_0170 from Lactobacillus johnsonii (strain CNCM I-12250 / La1 / NCC 533).